The sequence spans 373 residues: Alanine racemase (373 aa).

K40 serves as the catalytic Proton acceptor; specific for D-alanine. K40 carries the N6-(pyridoxal phosphate)lysine modification. R140 contacts substrate. The Proton acceptor; specific for L-alanine role is filled by Y268. M315 contacts substrate.

It belongs to the alanine racemase family. Pyridoxal 5'-phosphate serves as cofactor.

The catalysed reaction is L-alanine = D-alanine. It participates in amino-acid biosynthesis; D-alanine biosynthesis; D-alanine from L-alanine: step 1/1. Catalyzes the interconversion of L-alanine and D-alanine. May also act on other amino acids. The polypeptide is Alanine racemase (alr) (Levilactobacillus brevis (strain ATCC 367 / BCRC 12310 / CIP 105137 / JCM 1170 / LMG 11437 / NCIMB 947 / NCTC 947) (Lactobacillus brevis)).